A 202-amino-acid polypeptide reads, in one-letter code: Endothelin-1 (202 aa).

The signal sequence occupies residues 1 to 25 (MDYFPVIFSLLFVAFQGAPETAVLG). A propeptide spanning residues 26 to 50 (AELSPRAEKEVQSPPPSTSWRPRRS) is cleaved from the precursor. Residues 28 to 47 (LSPRAEKEVQSPPPSTSWRP) are disordered. 2 cysteine pairs are disulfide-bonded: Cys-53–Cys-67 and Cys-55–Cys-63. The propeptide occupies 74 to 202 (VNTPERVVPY…DQKLIHNRAH (129 aa)). The tract at residues 110 to 124 (CQCAHQKDKKCWNFC) is endothelin-like.

The protein belongs to the endothelin/sarafotoxin family.

Its subcellular location is the secreted. Endothelins are endothelium-derived vasoconstrictor peptides. Probable ligand for G-protein coupled receptors EDNRA and EDNRB which activates PTK2B, BCAR1, BCAR3 and, GTPases RAP1 and RHOA cascade in glomerular mesangial cells. Also binds the DEAR/FBXW7-AS1 receptor. Promotes mesenteric arterial wall remodeling via activation of ROCK signaling and subsequent colocalization of NFATC3 with F-actin filaments. NFATC3 then translocates to the nucleus where it subsequently promotes the transcription of the smooth muscle hypertrophy and differentiation marker ACTA2. The sequence is that of Endothelin-1 (Edn1) from Rattus norvegicus (Rat).